The sequence spans 69 residues: Large ribosomal subunit protein bL32c (69 aa).

The protein belongs to the bacterial ribosomal protein bL32 family.

The protein localises to the plastid. It localises to the chloroplast. This Pelargonium hortorum (Common geranium) protein is Large ribosomal subunit protein bL32c.